Here is a 504-residue protein sequence, read N- to C-terminus: Maturase K (504 aa).

The protein belongs to the intron maturase 2 family. MatK subfamily.

It is found in the plastid. It localises to the chloroplast. Functionally, usually encoded in the trnK tRNA gene intron. Probably assists in splicing its own and other chloroplast group II introns. This Nepenthes gracilis (Slender pitcher plant) protein is Maturase K.